A 999-amino-acid polypeptide reads, in one-letter code: uncharacterized protein (999 aa).

Residues 45 to 128 are compositionally biased toward low complexity; the sequence is NSNNIGNGNG…TPTITPSSPS (84 aa). The segment at 45–129 is disordered; it reads NSNNIGNGNG…PTITPSSPSV (85 aa). A coiled-coil region spans residues 723 to 767; sequence YQQSQQQQSQQQQQQQQQQQQQQQQQQQQQQQQQQQQQQQQQQQQ. Residues 873 to 887 are compositionally biased toward low complexity; sequence NDINNANNSNNNNNN. Positions 873 to 904 are disordered; that stretch reads NDINNANNSNNNNNNQSQVLLSPNRNKDGTLN. Residues 976 to 996 form a helical membrane-spanning segment; it reads LFSLVLILAFIWFFFEIYFFF.

Its subcellular location is the membrane. This is an uncharacterized protein from Dictyostelium discoideum (Social amoeba).